A 136-amino-acid chain; its full sequence is Fatty acid-binding protein homolog 5 (136 aa).

A fatty acid is bound by residues R111 and 131-133 (RAY).

Belongs to the calycin superfamily. Fatty-acid binding protein (FABP) family.

The protein is Fatty acid-binding protein homolog 5 (lbp-5) of Caenorhabditis elegans.